The chain runs to 123 residues: Large ribosomal subunit protein bL19 (123 aa).

It belongs to the bacterial ribosomal protein bL19 family.

Functionally, this protein is located at the 30S-50S ribosomal subunit interface and may play a role in the structure and function of the aminoacyl-tRNA binding site. This is Large ribosomal subunit protein bL19 from Ruegeria sp. (strain TM1040) (Silicibacter sp.).